The following is a 59-amino-acid chain: Venom protein 27.7 (59 aa).

The first 29 residues, 1 to 29 (MTFITLTIGLSLRTIFLIFIFLPPPHLLA), serve as a signal peptide directing secretion.

This sequence belongs to the non-disulfide-bridged peptide (NDBP) superfamily. In terms of tissue distribution, expressed by the venom gland.

The protein localises to the secreted. In Lychas mucronatus (Chinese swimming scorpion), this protein is Venom protein 27.7.